The sequence spans 221 residues: MGQKINPLGFRLGTTQGHHSLWISQPKNYSKGLKEDQNIRDFIQNYIQKNMRISSRDRVEGIARIEIKKTIDLIQIIIFMGFPIENRPRKVKEKIKELQIHLEKEFHYVKKKLKIAITKIAKPYQNPKILAEFLAGQLKDRVSFRKAMKKAIELAEQADTEGIRVQMAGRINGKDIARVEWIRRGRLPLQTIRTKIDYCCYTIRTIYGVLGIKIWIFIDEK.

Positions 43 to 121 (IQNYIQKNMR…KLKIAITKIA (79 aa)) constitute a KH type-2 domain.

The protein belongs to the universal ribosomal protein uS3 family. In terms of assembly, part of the 30S ribosomal subunit.

It localises to the plastid. It is found in the chloroplast. The sequence is that of Small ribosomal subunit protein uS3c (rps3) from Jasminum nudiflorum (Winter jasmine).